The chain runs to 589 residues: Guanylate-binding protein 2 (589 aa).

Positions 1–309 (MASEIHMLQP…GAISSGSLPC (309 aa)) are GTPase domain (Globular). A GB1/RHD3-type G domain is found at 35-276 (NQPVVVVAIV…FTSYIFSYSA (242 aa)). GTP-binding positions include 45–52 (GLYRTGKS), 181–182 (RD), and Leu245. Cys586 is modified (cysteine methyl ester). Cys586 carries S-geranylgeranyl cysteine lipidation. Positions 587-589 (TIL) are cleaved as a propeptide — removed in mature form.

The protein belongs to the TRAFAC class dynamin-like GTPase superfamily. GB1/RHD3 GTPase family. GB1 subfamily. In terms of assembly, homodimer; homodimerization occurs upon GTP-binding and is required for the association with membranous structures. Heterodimer with other family members, including GBP1, GBP3, GBP4 and GBP5. Isoprenylation is required for proper subcellular location. In terms of tissue distribution, widely expressed.

The protein localises to the cytoplasmic vesicle membrane. The protein resides in the golgi apparatus membrane. Its subcellular location is the cytoplasm. It localises to the perinuclear region. The catalysed reaction is GTP + H2O = GDP + phosphate + H(+). Functionally, interferon (IFN)-inducible GTPase that plays important roles in innate immunity against a diverse range of bacterial, viral and protozoan pathogens. Hydrolyzes GTP to GMP in 2 consecutive cleavage reactions, but the major reaction product is GDP. Following infection, recruited to the pathogen-containing vacuoles or vacuole-escaped bacteria and acts as a positive regulator of inflammasome assembly by promoting the release of inflammasome ligands from bacteria. Acts by promoting lysis of pathogen-containing vacuoles, releasing pathogens into the cytosol. Following pathogen release in the cytosol, promotes recruitment of proteins that mediate bacterial cytolysis: this liberates ligands that are detected by inflammasomes, such as lipopolysaccharide (LPS) that activates the non-canonical CASP4/CASP11 inflammasome or double-stranded DNA (dsDNA) that activates the AIM2 inflammasome. Confers protection to the protozoan pathogen Toxoplasma gondii. Independently of its GTPase activity, acts as an inhibitor of various viruses infectivity by inhibiting FURIN-mediated maturation of viral envelope proteins. The polypeptide is Guanylate-binding protein 2 (Gbp2) (Rattus norvegicus (Rat)).